The chain runs to 794 residues: LPS-assembly protein LptD (794 aa).

The N-terminal stretch at 1–31 (MPSHCSSLLCARFRLSSLAVIVALAASGVRA) is a signal peptide.

This sequence belongs to the LptD family. In terms of assembly, component of the lipopolysaccharide transport and assembly complex. Interacts with LptE and LptA.

It is found in the cell outer membrane. Its function is as follows. Together with LptE, is involved in the assembly of lipopolysaccharide (LPS) at the surface of the outer membrane. The protein is LPS-assembly protein LptD of Marinobacter nauticus (strain ATCC 700491 / DSM 11845 / VT8) (Marinobacter aquaeolei).